The chain runs to 549 residues: Zinc finger protein 266 (549 aa).

The 42-residue stretch at 1 to 42 folds into the KRAB domain; that stretch reads MLENYKNLATVGYQLFKPSLISWLEQEESRTVQRGDFQASEW. The C2H2-type 1; degenerate zinc finger occupies 156-178; sequence FDCSDSGKSFINHSHLQGHLRTH. A C2H2-type 2; degenerate zinc finger spans residues 184–206; it reads HEWKECGRGFIHSTDLAVRIQTH. 12 consecutive C2H2-type zinc fingers follow at residues 212–234, 240–262, 268–290, 296–318, 324–346, 352–374, 380–402, 408–430, 436–458, 464–486, 492–514, and 520–542; these read YKCK…MGTH, YECK…RKTH, YKCK…MKIH, YECK…LKTH, FECK…FRIH, YKCK…ARTH, YECK…TRTH, FECV…LRIH, FECL…MRTH, FTCM…MRIH, YKCK…ERTH, and YECK…ERRH. The interval 530–549 is disordered; it reads SSSSSFRNHERRHADERLSA.

The protein belongs to the krueppel C2H2-type zinc-finger protein family.

It is found in the nucleus. Functionally, may be involved in transcriptional regulation. This is Zinc finger protein 266 (ZNF266) from Homo sapiens (Human).